Reading from the N-terminus, the 64-residue chain is Large ribosomal subunit protein uL29 (64 aa).

The protein belongs to the universal ribosomal protein uL29 family.

The chain is Large ribosomal subunit protein uL29 from Synechococcus elongatus (strain ATCC 33912 / PCC 7942 / FACHB-805) (Anacystis nidulans R2).